The sequence spans 156 residues: Small ribosomal subunit protein uS7 (156 aa).

The protein belongs to the universal ribosomal protein uS7 family. Part of the 30S ribosomal subunit. Contacts proteins S9 and S11.

Its function is as follows. One of the primary rRNA binding proteins, it binds directly to 16S rRNA where it nucleates assembly of the head domain of the 30S subunit. Is located at the subunit interface close to the decoding center, probably blocks exit of the E-site tRNA. The polypeptide is Small ribosomal subunit protein uS7 (Aromatoleum aromaticum (strain DSM 19018 / LMG 30748 / EbN1) (Azoarcus sp. (strain EbN1))).